A 909-amino-acid polypeptide reads, in one-letter code: MLSNLLKSIFGSRNDRLIKQYLKIVRTINELEAAISPLSDEELRAKTSEFKQRVANGEKLDQLLPEAFAVVREAGKRVLGMRHFDVQLIGGMVLHEGKIAEMRTGEGKTLMATLPTYLNALSGKGVHIVTVNDYLAKRDAEWMGQIYRFLGLTVGVVLSQMPHEEKQAAYAADITYGTNNEYGFDYLRDNMVGHSAERVQRVLNFAIVDEVDSILIDEARTPLIISGMAEGDTEIYKRIDTLIPGLTRQEDEKSPGDYSVDEKTQQVLLSEEGFEHAEKLLSEAGLLSAGSSLYDPMNVSLIHHLNAALRARALYNRDQHYVVQNGEVIIVDEFTGRLMPGRRWSEGLHQAVEAKENVPIQKENQTLASITFQNYFRMYEKLAGMTGTADTEAFEFQQIYGLETVVIPTHRPMTREDRMDQVFRTPQEKYQAIIADIKDCYERKQPVLVGTTSIENNELLAALLTKEKLPHQVLNAKQHAREADIIAQAGQPKMVTIATNMAGRGTDIVLGGNPEQEINRIRADETLDEAAKSKKIEEIHQAWQARHDEVIKLGGLHIIGTERHESRRIDNQLRGRAGRQGDPGSSRFYLSLEDPLLRIFSSDRVANIMTRLKMPEGEAIEHPWVTRAIENAQRKVEARNFDIRKQLLEYDDVANDQRKVIYQQRNELLDAEQGVSETISAIRESVVHQLIDRYIPEQSIEEQWDIPGLEKALASEFHLQIPLQKWLEEDSELHEENLHDRIIELVDTSYLNKVEQVGAPIMHQYERMIMLHSIDTHWREHLAALDHLRQGIHLRGYAQQNPKQEYKREAFELFTSMLDAIKADVTKILMTVQIRSEQQVESVAETSALRNLEYHHDTHSELAEEQPPVAENRENKQQPFVRKNEKVGRNDPCPCGSGKKYKQCHGKLN.

ATP is bound by residues Gln87, 105–109 (GEGKT), and Asp507. Positions 857–909 (DTHSELAEEQPPVAENRENKQQPFVRKNEKVGRNDPCPCGSGKKYKQCHGKLN) are disordered. Basic and acidic residues predominate over residues 871–889 (ENRENKQQPFVRKNEKVGR). Cys893, Cys895, Cys904, and His905 together coordinate Zn(2+). The segment covering 899–909 (KKYKQCHGKLN) has biased composition (basic residues).

It belongs to the SecA family. Monomer and homodimer. Part of the essential Sec protein translocation apparatus which comprises SecA, SecYEG and auxiliary proteins SecDF-YajC and YidC. Requires Zn(2+) as cofactor.

The protein resides in the cell inner membrane. It localises to the cytoplasm. It carries out the reaction ATP + H2O + cellular proteinSide 1 = ADP + phosphate + cellular proteinSide 2.. Functionally, part of the Sec protein translocase complex. Interacts with the SecYEG preprotein conducting channel. Has a central role in coupling the hydrolysis of ATP to the transfer of proteins into and across the cell membrane, serving both as a receptor for the preprotein-SecB complex and as an ATP-driven molecular motor driving the stepwise translocation of polypeptide chains across the membrane. This Nitrosomonas europaea (strain ATCC 19718 / CIP 103999 / KCTC 2705 / NBRC 14298) protein is Protein translocase subunit SecA.